A 61-amino-acid chain; its full sequence is Small ribosomal subunit protein uS14 (61 aa).

Zn(2+)-binding residues include Cys24, Cys27, Cys40, and Cys43.

The protein belongs to the universal ribosomal protein uS14 family. Zinc-binding uS14 subfamily. Part of the 30S ribosomal subunit. Contacts proteins S3 and S10. The cofactor is Zn(2+).

Functionally, binds 16S rRNA, required for the assembly of 30S particles and may also be responsible for determining the conformation of the 16S rRNA at the A site. In Desulfovibrio desulfuricans (strain ATCC 27774 / DSM 6949 / MB), this protein is Small ribosomal subunit protein uS14.